A 964-amino-acid chain; its full sequence is Pumilio homolog 3 (964 aa).

The tract at residues 1-22 is disordered; the sequence is MMIPELGRRPMHRGNEDSSFGD. Ser-192 is subject to Phosphoserine. 3 disordered regions span residues 204 to 235, 256 to 300, and 343 to 388; these read PVVQ…ASQG, GTPD…TSGL, and DGHN…VANP. 2 stretches are compositionally biased toward polar residues: residues 207 to 216 and 223 to 234; these read QQPSRPASRN and DSNNNLSPSASQ. Thr-257 carries the post-translational modification Phosphothreonine. Composition is skewed to polar residues over residues 287 to 300 and 356 to 384; these read TSNQ…TSGL and RSDQ…SGSG. The region spanning 606–946 is the PUM-HD domain; the sequence is FGSSMLEEFK…HIVARVEKLV (341 aa). Pumilio repeat units follow at residues 626–661, 662–697, 698–733, 734–769, 770–806, 807–842, 843–878, and 879–920; these read EIAG…MVYE, EIMP…ELGE, KLID…QMVK, ELDG…FIIS, TFFG…KVME, EILS…VIIK, ELAG…LLVN, and EMLG…LILT.

It localises to the cytoplasm. Functionally, sequence-specific RNA-binding protein that regulates translation and mRNA stability by binding the 3'-UTR of target mRNAs. Binds the APUM-binding elements (APBEs) in the 3'-UTR mRNA sequence of CLV1, PNH, WUS and FAS2. The protein is Pumilio homolog 3 (APUM3) of Arabidopsis thaliana (Mouse-ear cress).